Here is a 289-residue protein sequence, read N- to C-terminus: Elongation factor Ts (289 aa).

An involved in Mg(2+) ion dislocation from EF-Tu region spans residues 80 to 83 (TDFV).

It belongs to the EF-Ts family.

It localises to the cytoplasm. Associates with the EF-Tu.GDP complex and induces the exchange of GDP to GTP. It remains bound to the aminoacyl-tRNA.EF-Tu.GTP complex up to the GTP hydrolysis stage on the ribosome. The protein is Elongation factor Ts of Francisella tularensis subsp. tularensis (strain FSC 198).